Here is a 248-residue protein sequence, read N- to C-terminus: Clathrin light chain A (248 aa).

Residues 1–92 form a disordered region; the sequence is MAELDPFGAP…YYQESNGPTD (92 aa). Residues 13 to 25 are compositionally biased toward gly residues; it reads APGGPALGNGVAG. A compositionally biased stretch (pro residues) spans 61-71; it reads GPQPHGEPPGG. The interval 100–162 is involved in binding clathrin heavy chain; the sequence is VDRLQSEPES…QLQKTKANNR (63 aa). Residues serine 105 and serine 206 each carry the phosphoserine modification. N6-acetyllysine is present on lysine 223. Serine 236 is subject to Phosphoserine. Residue lysine 242 is modified to N6-acetyllysine.

Belongs to the clathrin light chain family. As to quaternary structure, clathrin coats are formed from molecules containing 3 heavy chains and 3 light chains. Interacts with CALY; the interaction stimulates clathrin self-assembly and clathrin-mediated endocytosis. Interacts with CKAP5 and TACC3 forming the TACC3/ch-TOG/clathrin complex located at spindle inter-microtubules bridges; the complex implicates clathrin triskelions.

The protein localises to the cytoplasmic vesicle membrane. It localises to the membrane. Its subcellular location is the coated pit. It is found in the cytoplasm. The protein resides in the cytoskeleton. The protein localises to the spindle. Its function is as follows. Clathrin is the major protein of the polyhedral coat of coated pits and vesicles. Acts as a component of the TACC3/ch-TOG/clathrin complex proposed to contribute to stabilization of kinetochore fibers of the mitotic spindle by acting as inter-microtubule bridge. The polypeptide is Clathrin light chain A (CLTA) (Homo sapiens (Human)).